Consider the following 128-residue polypeptide: MFQAAGAAQATPSHEAKGSSGNSTVQRSKSFSLRAQVKETCAACQKTVYPMERLVADKLIFHNSCFCCKHCHTKLSLGSYAAMHGEFYCKPHFQQLFKSKGNYDEGFGRKQHKELWAHKEVDSGTKTA.

An N-acetylmethionine modification is found at methionine 1. Residues 1 to 25 (MFQAAGAAQATPSHEAKGSSGNSTV) are disordered. The LIM zinc-binding domain occupies 39-99 (ETCAACQKTV…KPHFQQLFKS (61 aa)). Residues cysteine 41, cysteine 44, histidine 62, cysteine 65, cysteine 68, cysteine 71, cysteine 89, and histidine 92 each contribute to the Zn(2+) site.

Interacts with ILK.

It is found in the cytoplasm. The protein localises to the nucleus. In terms of biological role, acts as an activator of the protein-kinase ILK, thereby regulating cell motility. This is LIM domain-containing protein 2 (Limd2) from Rattus norvegicus (Rat).